Reading from the N-terminus, the 498-residue chain is Glycerol kinase (498 aa).

Residue T12 coordinates ADP. ATP is bound by residues T12, T13, and S14. Residue T12 coordinates sn-glycerol 3-phosphate. R16 lines the ADP pocket. Positions 82, 83, 135, and 245 each coordinate sn-glycerol 3-phosphate. Positions 82, 83, 135, 245, and 246 each coordinate glycerol. T267 and G310 together coordinate ADP. T267, G310, Q314, and G411 together coordinate ATP. ADP-binding residues include G411 and N415.

It belongs to the FGGY kinase family. Homotetramer and homodimer (in equilibrium).

The enzyme catalyses glycerol + ATP = sn-glycerol 3-phosphate + ADP + H(+). Its pathway is polyol metabolism; glycerol degradation via glycerol kinase pathway; sn-glycerol 3-phosphate from glycerol: step 1/1. With respect to regulation, activated by phosphorylation and inhibited by fructose 1,6-bisphosphate (FBP). Key enzyme in the regulation of glycerol uptake and metabolism. Catalyzes the phosphorylation of glycerol to yield sn-glycerol 3-phosphate. The chain is Glycerol kinase from Clostridium botulinum (strain Alaska E43 / Type E3).